Reading from the N-terminus, the 101-residue chain is Phosphoribosyl-AMP cyclohydrolase (101 aa).

Mg(2+) is bound at residue Asp71. A Zn(2+)-binding site is contributed by Cys72. Residues Asp73 and Asp75 each coordinate Mg(2+). 2 residues coordinate Zn(2+): Cys88 and Cys95.

It belongs to the PRA-CH family. As to quaternary structure, homodimer. The cofactor is Mg(2+). Zn(2+) serves as cofactor.

It localises to the cytoplasm. It carries out the reaction 1-(5-phospho-beta-D-ribosyl)-5'-AMP + H2O = 1-(5-phospho-beta-D-ribosyl)-5-[(5-phospho-beta-D-ribosylamino)methylideneamino]imidazole-4-carboxamide. It functions in the pathway amino-acid biosynthesis; L-histidine biosynthesis; L-histidine from 5-phospho-alpha-D-ribose 1-diphosphate: step 3/9. Its function is as follows. Catalyzes the hydrolysis of the adenine ring of phosphoribosyl-AMP. This is Phosphoribosyl-AMP cyclohydrolase from Bacillus cereus (strain ATCC 10987 / NRS 248).